The sequence spans 153 residues: Histone H2B.6 (153 aa).

2 stretches are compositionally biased toward basic and acidic residues: residues 1 to 28 (MAPKAEKKPAAKKPAEEEPAAEKAEKAP) and 36 to 53 (EKRLPAGKGEKGSGEGKK). The interval 1–60 (MAPKAEKKPAAKKPAEEEPAAEKAEKAPAGKKPKAEKRLPAGKGEKGSGEGKKAGRKKGK) is disordered. N6-acetyllysine occurs at positions 7 and 37. A Glycyl lysine isopeptide (Lys-Gly) (interchain with G-Cter in ubiquitin) cross-link involves residue K149.

It belongs to the histone H2B family. In terms of assembly, the nucleosome is a histone octamer containing two molecules each of H2A, H2B, H3 and H4 assembled in one H3-H4 heterotetramer and two H2A-H2B heterodimers. The octamer wraps approximately 147 bp of DNA. Can be acetylated to form H2BK6ac and H2BK33ac. Post-translationally, monoubiquitinated by BRE1 to form H2BK143ub1 and deubiquitinated by UBP26. Required for heterochromatic histone H3 di- and trimethylation at H3K4me. May give a specific tag for epigenetic transcriptional activation.

Its subcellular location is the nucleus. It is found in the chromosome. Functionally, core component of nucleosome. Nucleosomes wrap and compact DNA into chromatin, limiting DNA accessibility to the cellular machineries which require DNA as a template. Histones thereby play a central role in transcription regulation, DNA repair, DNA replication and chromosomal stability. DNA accessibility is regulated via a complex set of post-translational modifications of histones, also called histone code, and nucleosome remodeling. The protein is Histone H2B.6 (H2B.6) of Oryza sativa subsp. japonica (Rice).